The chain runs to 126 residues: MSVPAELGYTKEHEWVAINEGIATVGITAFAAEALGDIVYVEPPEVGSTVTAGESCGEIESHKSVSELYSPVDGEVVDVNQAAVDDPELIGSDPYGRGWLFKVELAEEPADLLTPEQYTQLTEGEG.

The 83-residue stretch at 22 to 104 folds into the Lipoyl-binding domain; the sequence is IATVGITAFA…YGRGWLFKVE (83 aa). The residue at position 63 (Lys63) is an N6-lipoyllysine.

It belongs to the GcvH family. In terms of assembly, the glycine cleavage system is composed of four proteins: P, T, L and H. (R)-lipoate is required as a cofactor.

Its function is as follows. The glycine cleavage system catalyzes the degradation of glycine. The H protein shuttles the methylamine group of glycine from the P protein to the T protein. The sequence is that of Glycine cleavage system H protein from Thermobifida fusca (strain YX).